We begin with the raw amino-acid sequence, 548 residues long: Chaperonin GroEL (548 aa).

ATP is bound by residues 29–32 (TLGP), Lys50, 86–90 (DGTTT), Gly416, and Asp497.

The protein belongs to the chaperonin (HSP60) family. Forms a cylinder of 14 subunits composed of two heptameric rings stacked back-to-back. Interacts with the co-chaperonin GroES.

It localises to the cytoplasm. It carries out the reaction ATP + H2O + a folded polypeptide = ADP + phosphate + an unfolded polypeptide.. Functionally, together with its co-chaperonin GroES, plays an essential role in assisting protein folding. The GroEL-GroES system forms a nano-cage that allows encapsulation of the non-native substrate proteins and provides a physical environment optimized to promote and accelerate protein folding. In Neorickettsia risticii (Ehrlichia risticii), this protein is Chaperonin GroEL.